Consider the following 801-residue polypeptide: Quinoprotein glucose dehydrogenase A (801 aa).

A signal peptide spans 1-33 (MNQPTSRSGLTTFTVIIIGLLALFLLIGGIWLA). The next 4 helical transmembrane spans lie at 39 to 55 (IYYI…AWQL), 59 to 79 (ASTA…WSVW), 94 to 108 (ILGI…PAVT), and 119 to 138 (VALS…SIFN). Residue aspartate 471 is the Proton acceptor of the active site.

This sequence belongs to the bacterial PQQ dehydrogenase family. In terms of assembly, monomer. Requires pyrroloquinoline quinone as cofactor.

Its subcellular location is the cell inner membrane. It catalyses the reaction D-glucose + A = D-glucono-1,5-lactone + AH2. Its function is as follows. Catalyzes an exceptionally high rate of oxidation of a wide range of aldose sugars, including D-glucose, galactose, arabinose and xylose, and also the disaccharides lactose, cellobiose and maltose. This is Quinoprotein glucose dehydrogenase A (gdhA) from Acinetobacter calcoaceticus.